We begin with the raw amino-acid sequence, 469 residues long: Glutamate--tRNA ligase (469 aa).

A 'HIGH' region motif is present at residues 11 to 21; it reads PSPTGFIHLGN. A compositionally biased stretch (basic and acidic residues) spans 121–131; that stretch reads PRYDGTWRPEP. Residues 121–141 form a disordered region; the sequence is PRYDGTWRPEPGKVLPEPPPG. Positions 243–247 match the 'KMSKS' region motif; the sequence is KMSKR. Lysine 246 contributes to the ATP binding site.

The protein belongs to the class-I aminoacyl-tRNA synthetase family. Glutamate--tRNA ligase type 1 subfamily. In terms of assembly, monomer.

The protein resides in the cytoplasm. The enzyme catalyses tRNA(Glu) + L-glutamate + ATP = L-glutamyl-tRNA(Glu) + AMP + diphosphate. Functionally, catalyzes the attachment of glutamate to tRNA(Glu) in a two-step reaction: glutamate is first activated by ATP to form Glu-AMP and then transferred to the acceptor end of tRNA(Glu). In Burkholderia multivorans (strain ATCC 17616 / 249), this protein is Glutamate--tRNA ligase.